A 161-amino-acid polypeptide reads, in one-letter code: Ribonuclease H (161 aa).

The region spanning 5-149 (EKLAIAAATD…VDAIAVAFSK (145 aa)) is the RNase H type-1 domain. 4 residues coordinate Mg(2+): aspartate 14, glutamate 53, aspartate 78, and aspartate 141.

The protein belongs to the RNase H family. In terms of assembly, monomer. The cofactor is Mg(2+).

Its subcellular location is the cytoplasm. The catalysed reaction is Endonucleolytic cleavage to 5'-phosphomonoester.. Endonuclease that specifically degrades the RNA of RNA-DNA hybrids. The chain is Ribonuclease H from Prochlorococcus marinus (strain NATL1A).